The chain runs to 166 residues: MTDTSAAGNPTPGQQPANPPSLRVLGQYVKDLSFENPGHPPVQTQPNIDLGIDVGASPHADGNGLFEVSLKLSAKASAGDTVLFISELDYAGLFQLQNVPEGQVEAMLLIECPRLLFPFARRIIAEITREGGFPPLLIDPVDFVALYQSQYRRAAERAQNGNGGAS.

Polar residues predominate over residues 1-16; that stretch reads MTDTSAAGNPTPGQQP. The disordered stretch occupies residues 1–21; sequence MTDTSAAGNPTPGQQPANPPS.

It belongs to the SecB family. Homotetramer, a dimer of dimers. One homotetramer interacts with 1 SecA dimer.

It is found in the cytoplasm. One of the proteins required for the normal export of preproteins out of the cell cytoplasm. It is a molecular chaperone that binds to a subset of precursor proteins, maintaining them in a translocation-competent state. It also specifically binds to its receptor SecA. This is Protein-export protein SecB from Hyphomonas neptunium (strain ATCC 15444).